The chain runs to 319 residues: Iron-sulfur cluster transfer protein NUBPL (319 aa).

Residues methionine 1–leucine 38 constitute a mitochondrion transit peptide. Glycine 75–serine 82 contributes to the ATP binding site.

It belongs to the Mrp/NBP35 ATP-binding proteins family. The cofactor is [4Fe-4S] cluster.

Its subcellular location is the mitochondrion. Functionally, iron-sulfur cluster transfer protein involved in the assembly of the mitochondrial membrane respiratory chain NADH dehydrogenase (Complex I). May deliver one or more Fe-S clusters to complex I subunits. This chain is Iron-sulfur cluster transfer protein NUBPL (Nubpl), found in Mus musculus (Mouse).